The following is a 462-amino-acid chain: MLDFAIFAVTFLLALVGAVLYLYPASRQAAGIPGITPTEEKDGNLPDIVNSGSLHEFLVNLHERYGPVVSFWFGRRLVVSLGTVDVLKQHINPNKTLDPFETMLKSLLRYQSDSGNVSENHMRKKLYENGVTNCLRSNFALLIKLSEELLDKWLSYPESQHVPLCQHMLGFAMKSVTQMVMGSTFEDEQEVIRFQKNHGTVWSEIGKGFLDGSLDKSTTRKKQYEDALMQLESILKKIIKERKGRNFSQHIFIDSLVQGNLNDQQILEDTMIFSLASCMITAKLCTWAVCFLTTYEEIQKKLYEEIDQVLGKGPITSEKIEELRYCRQVLCETVRTAKLTPVSARLQDIEGKIDKFIIPRETLVLYALGVVLQDPGTWSSPYKFDPERFDDESVMKTFSLLGFSGTRECPELRFAYMVTAVLLSVLLRRLHLLSVEGQVIETKYELVTSSKEEAWITVSKRY.

Residues 4 to 24 (FAIFAVTFLLALVGAVLYLYP) traverse the membrane as a helical segment. A heme-binding site is contributed by Cys409.

Belongs to the cytochrome P450 family. Requires heme as cofactor.

The protein localises to the membrane. This Bos taurus (Bovine) protein is Cytochrome P450 20A1 (CYP20A1).